A 151-amino-acid polypeptide reads, in one-letter code: Large ribosomal subunit protein uL13 (151 aa).

The protein belongs to the universal ribosomal protein uL13 family. As to quaternary structure, part of the 50S ribosomal subunit.

Its function is as follows. This protein is one of the early assembly proteins of the 50S ribosomal subunit, although it is not seen to bind rRNA by itself. It is important during the early stages of 50S assembly. In Microchaete diplosiphon (Fremyella diplosiphon), this protein is Large ribosomal subunit protein uL13.